Reading from the N-terminus, the 340-residue chain is Guanine nucleotide-binding protein G(I)/G(S)/G(T) subunit beta-3 (340 aa).

WD repeat units lie at residues 53 to 83 (GHLA…IVWD), 95 to 125 (LRSS…SIYS), 141 to 170 (AHTG…ALWD), 182 to 212 (GHTG…KLWD), 224 to 254 (GHES…RLFD), 268 to 298 (SIIC…NVWD), and 310 to 340 (GHDN…KIWN).

This sequence belongs to the WD repeat G protein beta family. As to quaternary structure, g proteins are composed of 3 units, alpha, beta and gamma. Interacts with RASD2. In terms of tissue distribution, expressed at a high level in the heart and at a much lower level in the brain.

Functionally, guanine nucleotide-binding proteins (G proteins) are involved as a modulator or transducer in various transmembrane signaling systems. The beta and gamma chains are required for the GTPase activity, for replacement of GDP by GTP, and for G protein-effector interaction. The sequence is that of Guanine nucleotide-binding protein G(I)/G(S)/G(T) subunit beta-3 (Gnb3) from Rattus norvegicus (Rat).